The following is a 962-amino-acid chain: Glycine dehydrogenase (decarboxylating) (962 aa).

Lys709 is subject to N6-(pyridoxal phosphate)lysine.

The protein belongs to the GcvP family. As to quaternary structure, the glycine cleavage system is composed of four proteins: P, T, L and H. It depends on pyridoxal 5'-phosphate as a cofactor.

The enzyme catalyses N(6)-[(R)-lipoyl]-L-lysyl-[glycine-cleavage complex H protein] + glycine + H(+) = N(6)-[(R)-S(8)-aminomethyldihydrolipoyl]-L-lysyl-[glycine-cleavage complex H protein] + CO2. Functionally, the glycine cleavage system catalyzes the degradation of glycine. The P protein binds the alpha-amino group of glycine through its pyridoxal phosphate cofactor; CO(2) is released and the remaining methylamine moiety is then transferred to the lipoamide cofactor of the H protein. This Shewanella frigidimarina (strain NCIMB 400) protein is Glycine dehydrogenase (decarboxylating).